Consider the following 475-residue polypeptide: ATP synthase subunit beta, chloroplastic (475 aa).

Residue 155–162 (GGAGVGKT) participates in ATP binding.

The protein belongs to the ATPase alpha/beta chains family. In terms of assembly, F-type ATPases have 2 components, CF(1) - the catalytic core - and CF(0) - the membrane proton channel. CF(1) has five subunits: alpha(3), beta(3), gamma(1), delta(1), epsilon(1). CF(0) has four main subunits: a(1), b(1), b'(1) and c(9-12).

It is found in the plastid. It localises to the chloroplast thylakoid membrane. It carries out the reaction ATP + H2O + 4 H(+)(in) = ADP + phosphate + 5 H(+)(out). Produces ATP from ADP in the presence of a proton gradient across the membrane. The catalytic sites are hosted primarily by the beta subunits. This is ATP synthase subunit beta, chloroplastic from Ochrosphaera neapolitana.